Reading from the N-terminus, the 205-residue chain is Endoribonuclease YbeY (205 aa).

Zn(2+) contacts are provided by H124, H128, and H134. The segment at 162-205 (GTAPVAPGGEAQVPNEALETSGKRQDHSLGEILPGGMSRRLAGS) is disordered.

This sequence belongs to the endoribonuclease YbeY family. Requires Zn(2+) as cofactor.

It localises to the cytoplasm. Its function is as follows. Single strand-specific metallo-endoribonuclease involved in late-stage 70S ribosome quality control and in maturation of the 3' terminus of the 16S rRNA. The polypeptide is Endoribonuclease YbeY (Beijerinckia indica subsp. indica (strain ATCC 9039 / DSM 1715 / NCIMB 8712)).